The chain runs to 509 residues: T-complex protein 11-like protein 1 (509 aa).

The span at 1–12 shows a compositional bias: basic and acidic residues; the sequence is MSENLDKSHVDE. The disordered stretch occupies residues 1-57; that stretch reads MSENLDKSHVDEAGEAEAAASEQGLEGALECSDETLQKKVKSDSPSSQRVGRPHSSP. Residues 16-30 are compositionally biased toward low complexity; sequence AEAAASEQGLEGALE. Serine 56 bears the Phosphoserine mark.

It belongs to the TCP11 family.

The polypeptide is T-complex protein 11-like protein 1 (Tcp11l1) (Mus musculus (Mouse)).